Consider the following 103-residue polypeptide: Large ribosomal subunit protein uL24 (103 aa).

Belongs to the universal ribosomal protein uL24 family. In terms of assembly, part of the 50S ribosomal subunit.

One of two assembly initiator proteins, it binds directly to the 5'-end of the 23S rRNA, where it nucleates assembly of the 50S subunit. Functionally, one of the proteins that surrounds the polypeptide exit tunnel on the outside of the subunit. The sequence is that of Large ribosomal subunit protein uL24 from Geobacillus sp. (strain WCH70).